The chain runs to 382 residues: Putative phospholipase A1 (382 aa).

An N-terminal signal peptide occupies residues 1–27 (MPTMGAEMNTRNMRYILLTGLLPMASA). At 28–65 (FGETALQCAALTDNVTRLACYDRIFAAQLPSSAGQEGQ) the chain is on the periplasmic side. Residues 66–78 (ESKAVLNLTETVR) traverse the membrane as a beta stranded segment. At 79–168 (SSLDKGEAVI…VQEKFGQQKR (90 aa)) the chain is on the extracellular side. The beta stranded transmembrane segment at 169-183 (AETKLQVSFKSKIAE) threads the bilayer. Over 184-189 (DLFKTR) the chain is Periplasmic. The beta stranded transmembrane segment at 190-202 (ADLWFGYTQRSDW) threads the bilayer. At 203–213 (QIYNQGRKSAP) the chain is on the extracellular side. Position 211 (Ser-211) interacts with Ca(2+). The chain crosses the membrane as a beta stranded span at residues 214 to 233 (FRNTDYKPEIFLTQPVKADL). Over 234–236 (PFG) the chain is Periplasmic. Residues 237-250 (GRLRMLGAGFVHQS) traverse the membrane as a beta stranded segment. The active-site Proton acceptor is His-248. Ser-250 acts as the Nucleophile in catalysis. Topologically, residues 251-259 (NGQSRPESR) are extracellular. Ser-258 contributes to the Ca(2+) binding site. The beta stranded transmembrane segment at 260 to 272 (SWNRIYAMAGMEW) threads the bilayer. Residues 273 to 274 (GK) are Periplasmic-facing. Residues 275-284 (LTVIPRVWVR) form a beta stranded membrane-spanning segment. At 285 to 306 (AFDQSGDKNDNPDIADYMGYGD) the chain is on the extracellular side. Asp-294 contributes to the Ca(2+) binding site. The beta stranded transmembrane segment at 307-313 (VKLQYRL) threads the bilayer. Residues 314 to 315 (ND) lie on the Periplasmic side of the membrane. Residues 316–325 (RQNVYSVLRY) form a beta stranded membrane-spanning segment. At 326–332 (NPKTGYG) the chain is on the extracellular side. Residues 333-341 (AIEAAYTFP) traverse the membrane as a beta stranded segment. The Periplasmic segment spans residues 342 to 346 (IKGKL). The beta stranded transmembrane segment at 347-356 (KGVVRGFHGY) threads the bilayer. Residues 357-365 (GESLIDYNH) lie on the Extracellular side of the membrane. The beta stranded transmembrane segment at 366 to 377 (KQNGIGIGLMFN) threads the bilayer. At 378–382 (DLDGI) the chain is on the periplasmic side.

This sequence belongs to the phospholipase A1 family. In terms of assembly, homodimer; dimerization is reversible, and the dimeric form is the active one. Requires Ca(2+) as cofactor.

It localises to the cell outer membrane. It catalyses the reaction a 1,2-diacyl-sn-glycero-3-phosphocholine + H2O = a 2-acyl-sn-glycero-3-phosphocholine + a fatty acid + H(+). The enzyme catalyses a 1,2-diacyl-sn-glycero-3-phosphocholine + H2O = a 1-acyl-sn-glycero-3-phosphocholine + a fatty acid + H(+). Its function is as follows. Hydrolysis of phosphatidylcholine with phospholipase A2 (EC 3.1.1.4) and phospholipase A1 (EC 3.1.1.32) activities. The sequence is that of Putative phospholipase A1 from Neisseria meningitidis serogroup B (strain ATCC BAA-335 / MC58).